Here is a 519-residue protein sequence, read N- to C-terminus: 2,3-bisphosphoglycerate-independent phosphoglycerate mutase (519 aa).

The Mn(2+) site is built by D18 and S68. The active-site Phosphoserine intermediate is the S68. Residues H129, 159–160, R191, R197, 267–270, and K341 contribute to the substrate site; these read RD and RADR. Mn(2+) is bound by residues D408, H412, D449, H450, and H468.

The protein belongs to the BPG-independent phosphoglycerate mutase family. Monomer. The cofactor is Mn(2+).

It carries out the reaction (2R)-2-phosphoglycerate = (2R)-3-phosphoglycerate. It participates in carbohydrate degradation; glycolysis; pyruvate from D-glyceraldehyde 3-phosphate: step 3/5. Its function is as follows. Catalyzes the interconversion of 2-phosphoglycerate and 3-phosphoglycerate. In Coxiella burnetii (strain RSA 493 / Nine Mile phase I), this protein is 2,3-bisphosphoglycerate-independent phosphoglycerate mutase.